A 399-amino-acid polypeptide reads, in one-letter code: Succinate--CoA ligase [ADP-forming] subunit beta (399 aa).

An ATP-grasp domain is found at 9 to 254 (KAVLQPFGVS…TTEEDAKEIE (246 aa)). Residues K46, 53 to 55 (GRG), E109, S112, and E117 contribute to the ATP site. Residues N209 and D223 each coordinate Mg(2+). Residues N274 and 331-333 (GIM) contribute to the substrate site.

It belongs to the succinate/malate CoA ligase beta subunit family. Heterotetramer of two alpha and two beta subunits. Mg(2+) serves as cofactor.

It carries out the reaction succinate + ATP + CoA = succinyl-CoA + ADP + phosphate. The enzyme catalyses GTP + succinate + CoA = succinyl-CoA + GDP + phosphate. It participates in carbohydrate metabolism; tricarboxylic acid cycle; succinate from succinyl-CoA (ligase route): step 1/1. Succinyl-CoA synthetase functions in the citric acid cycle (TCA), coupling the hydrolysis of succinyl-CoA to the synthesis of either ATP or GTP and thus represents the only step of substrate-level phosphorylation in the TCA. The beta subunit provides nucleotide specificity of the enzyme and binds the substrate succinate, while the binding sites for coenzyme A and phosphate are found in the alpha subunit. The polypeptide is Succinate--CoA ligase [ADP-forming] subunit beta (Rhodopseudomonas palustris (strain BisA53)).